A 331-amino-acid polypeptide reads, in one-letter code: FMRFamide-related neuropeptides (331 aa).

The signal sequence occupies residues 1–25 (MRCWSPCSLLVVIVIYCLSSHTSEA). A propeptide spanning residues 26 to 65 (FDLAQACVESQRLSLLPICDTIFAVQQEGAQQSADDGMRS) is cleaved from the precursor. A phenylalanine amide mark is found at Phe71 and Phe83. Residues 86–94 (NVPDLPFED) constitute a propeptide that is removed on maturation. Residue Phe100 is modified to Phenylalanine amide. Positions 103–168 (AAPQLDDLLK…YIDDVEDSDV (66 aa)) are excised as a propeptide. The interval 122–158 (QKADETSVRRKRSTDAAPQNNAENPEQKNDSAKITKR) is disordered. Over residues 146–158 (PEQKNDSAKITKR) the composition is skewed to basic and acidic residues. Phenylalanine amide occurs at positions 174 and 181. A propeptide spanning residues 184–194 (NPSDAGNKLTE) is cleaved from the precursor. A Phenylalanine amide modification is found at Phe200. A propeptide spanning residues 203-205 (DPE) is cleaved from the precursor. Position 211 is a phenylalanine amide (Phe211). Positions 214–216 (SDD) are excised as a propeptide. Phe222 is modified (phenylalanine amide). The propeptide occupies 225-236 (NPSDVEDELEED). Phe242 is subject to Phenylalanine amide. Residues 245–254 (GGEDDEEEAE) constitute a propeptide that is removed on maturation. Phe260 is subject to Phenylalanine amide. A propeptide spanning residues 263–265 (DPE) is cleaved from the precursor. Position 271 is a phenylalanine amide (Phe271). Positions 274 to 277 (SGED) are excised as a propeptide. Over residues 282-296 (RFGRNPDEQEADKRF) the composition is skewed to basic and acidic residues. The segment at 282-310 (RFGRNPDEQEADKRFMRFGRGGEDDEVST) is disordered. Phenylalanine amide is present on Phe283. The propeptide occupies 286 to 293 (NPDEQEAD). The residue at position 299 (Phe299) is a Phenylalanine amide. Positions 302-312 (GGEDDEVSTED) are excised as a propeptide. Phe318 bears the Phenylalanine amide mark. A propeptide spanning residues 321–331 (SADKCKGCLEG) is cleaved from the precursor.

Belongs to the FARP (FMRFamide related peptide) family.

The protein resides in the secreted. Excitatory neurotransmitters that directly modulate chromatophore function by activating chromatophore expansion at the chromatophore neuromuscular junction. This chain is FMRFamide-related neuropeptides, found in Doryteuthis pealeii (Longfin inshore squid).